The sequence spans 146 residues: Hemoglobin subunit beta (146 aa).

In terms of domain architecture, Globin spans 2 to 146; sequence HWSAEEKQLI…VAHALARKYH (145 aa). 2 residues coordinate heme b: His-63 and His-92.

Belongs to the globin family. In terms of assembly, heterotetramer of two alpha chains and two beta chains. As to expression, red blood cells.

In terms of biological role, involved in oxygen transport from the lung to the various peripheral tissues. The protein is Hemoglobin subunit beta (HBB) of Psittacula krameri (Rose-ringed parakeet).